The primary structure comprises 463 residues: Tryptophan aminotransferase-related protein 4 (463 aa).

Residues 6-26 (LLLIVSIILNLVFTIHILYYS) form a helical membrane-spanning segment. Pyridoxal 5'-phosphate contacts are provided by residues Tyr124, 163–164 (TT), Asn239, 259–262 (DYAY), 282–285 (SLSK), and Arg293. Lys285 carries the N6-(pyridoxal phosphate)lysine modification.

It belongs to the alliinase family. Requires pyridoxal 5'-phosphate as cofactor.

It is found in the membrane. In terms of biological role, probable aminotransferase. This is Tryptophan aminotransferase-related protein 4 (TAR4) from Arabidopsis thaliana (Mouse-ear cress).